A 31-amino-acid chain; its full sequence is Hemocyanin subunit 1 (31 aa).

This sequence belongs to the tyrosinase family. Hemocyanin subfamily. Hemolymph.

The protein resides in the secreted. It is found in the extracellular space. Functionally, hemocyanins are copper-containing oxygen carriers occurring freely dissolved in the hemolymph of many mollusks and arthropods. The protein is Hemocyanin subunit 1 of Homarus americanus (American lobster).